Here is a 64-residue protein sequence, read N- to C-terminus: Large ribosomal subunit protein bL35 (64 aa).

This sequence belongs to the bacterial ribosomal protein bL35 family.

This Chloroherpeton thalassium (strain ATCC 35110 / GB-78) protein is Large ribosomal subunit protein bL35.